We begin with the raw amino-acid sequence, 154 residues long: Ascorbate-specific PTS system EIIA component (154 aa).

Residues 6–150 enclose the PTS EIIA type-2 domain; sequence SLAENNSIRL…QEVLDLIDRT (145 aa). The Tele-phosphohistidine intermediate role is filled by His-68. His-68 carries the phosphohistidine modification.

The protein localises to the cytoplasm. The phosphoenolpyruvate-dependent sugar phosphotransferase system (sugar PTS), a major carbohydrate active transport system, catalyzes the phosphorylation of incoming sugar substrates concomitantly with their translocation across the cell membrane. The enzyme II UlaABC PTS system is involved in ascorbate transport. This Salmonella choleraesuis (strain SC-B67) protein is Ascorbate-specific PTS system EIIA component (ulaC).